Here is a 285-residue protein sequence, read N- to C-terminus: uncharacterized protein (285 aa).

The helical transmembrane segment at 197–217 (PTIGALLSLVSAFFSFIPFLM) threads the bilayer.

It is found in the membrane. This is an uncharacterized protein from Saccharomyces cerevisiae (strain ATCC 204508 / S288c) (Baker's yeast).